The following is a 317-amino-acid chain: Pinoresinol reductase 1 (317 aa).

Residues Thr18, Tyr20, Ile21, Arg41, Lys50, Ser90, Gly91, Arg95, Asn98, Ser121, and Glu122 each contribute to the NADP(+) site. Residue Met125 participates in (-)-pinoresinol binding. NADP(+) contacts are provided by Lys144 and Phe166. Catalysis depends on Lys144, which acts as the Proton acceptor. The (-)-pinoresinol site is built by Met177 and Val178.

It belongs to the NmrA-type oxidoreductase family. Isoflavone reductase subfamily. Forms homodimers. As to expression, expressed in roots and stems.

The enzyme catalyses (-)-lariciresinol + NADP(+) = (-)-pinoresinol + NADPH + H(+). It carries out the reaction (+)-lariciresinol + NADP(+) = (+)-pinoresinol + NADPH + H(+). Functionally, reductase involved in lignan biosynthesis. Involved in secondary cell wall biosynthesis in fiber cells. Unlike conventional pinoresinol reductases that can reduce both pinoresinol and lariciresinol, PRR1 shows a strict substrate preference toward pinoresinol. Active on both (+) and (-)-pinoresinol. Abstracts the 4R-hydride from the NADPH cofactor during catalysis. This chain is Pinoresinol reductase 1, found in Arabidopsis thaliana (Mouse-ear cress).